Reading from the N-terminus, the 101-residue chain is Anti-lipopolysaccharide factor (101 aa).

Cysteine 31 and cysteine 52 are joined by a disulfide.

Binds tightly to LPS and thus specifically inhibits the LPS-mediated activation of the hemolymph coagulation. It has a strong antibacterial effect especially on the growth of Gram-negative bacteria. This chain is Anti-lipopolysaccharide factor, found in Limulus polyphemus (Atlantic horseshoe crab).